Here is a 616-residue protein sequence, read N- to C-terminus: Leucine aminopeptidase (616 aa).

Substrate contacts are provided by residues 128 to 130 (QCQ) and 282 to 286 (GGMEN). Zn(2+) is bound at residue H309. E310 acts as the Proton acceptor in catalysis. Zn(2+) is bound by residues H313 and E332. Y397 (proton donor) is an active-site residue. Substrate is bound at residue 566–568 (RMK).

Belongs to the peptidase M1 family. The cofactor is Zn(2+).

The protein localises to the cytoplasm. It catalyses the reaction an epoxide + H2O = an ethanediol. Its function is as follows. Aminopeptidase that preferentially cleaves di- and tripeptides. Also has low epoxide hydrolase activity (in vitro). Can hydrolyze the epoxide leukotriene LTA(4) but it forms preferentially 5,6-dihydroxy-7,9,11,14-eicosatetraenoic acid rather than the cytokine leukotriene B(4) as the product compared to the homologous mammalian enzyme (in vitro). The protein is Leucine aminopeptidase (LKHA4) of Arabidopsis thaliana (Mouse-ear cress).